Consider the following 218-residue polypeptide: Glutathione S-transferase Mu 5 (218 aa).

Residues 2-88 form the GST N-terminal domain; the sequence is PMTLGYWDIR…YIARKHNLCG (87 aa). Residues 7 to 8, 46 to 50, 59 to 60, and 72 to 73 contribute to the glutathione site; these read YW, WLNEK, NL, and QS. The 118-residue stretch at 90–207 folds into the GST C-terminal domain; sequence TEEEKIRVDI…MKSSQFLRGL (118 aa). Tyr116 serves as a coordination point for substrate.

The protein belongs to the GST superfamily. Mu family. Homodimer.

The protein localises to the cytoplasm. The catalysed reaction is RX + glutathione = an S-substituted glutathione + a halide anion + H(+). In terms of biological role, conjugation of reduced glutathione to a wide number of exogenous and endogenous hydrophobic electrophiles. The sequence is that of Glutathione S-transferase Mu 5 (GSTM5) from Homo sapiens (Human).